The primary structure comprises 512 residues: Maturase K (512 aa).

Belongs to the intron maturase 2 family. MatK subfamily.

It localises to the plastid. The protein localises to the chloroplast. In terms of biological role, usually encoded in the trnK tRNA gene intron. Probably assists in splicing its own and other chloroplast group II introns. The protein is Maturase K of Erythranthe guttata (Yellow monkey flower).